Here is a 357-residue protein sequence, read N- to C-terminus: Outer membrane porin protein OmpD (357 aa).

The first 21 residues, 1 to 21, serve as a signal peptide directing secretion; that stretch reads MKLKLVAVAVTTLLAAGAVNA.

Belongs to the Gram-negative porin family. In terms of assembly, homotrimer.

It localises to the cell outer membrane. In terms of biological role, forms pores that allow passive diffusion of small molecules across the outer membrane. This chain is Outer membrane porin protein OmpD (ompD), found in Citrobacter koseri (strain ATCC BAA-895 / CDC 4225-83 / SGSC4696).